We begin with the raw amino-acid sequence, 1065 residues long: DNA ligase 4 (1065 aa).

A disordered region spans residues 1 to 20; sequence MAVHAPYNHAPPPTQEINGQ. The ATP site is built by E295, K297, L298, R302, E357, F387, E452, K457, K474, and K476. The active-site N6-AMP-lysine intermediate is the K297. E357 provides a ligand contact to Mg(2+). E452 is a Mg(2+) binding site. A BRCT 1 domain is found at 696–775; sequence VETSIFSDMT…TALPFLKEFL (80 aa). Residues 825–928 form a disordered region; that stretch reads GEDKDEIDVE…SDVGVNGDDY (104 aa). Composition is skewed to basic and acidic residues over residues 834-864 and 886-900; these read EESRESKNRRMAREDLKEKESNRTLEQKKLQ and MSLKEESDTDSERSR. Positions 954 to 1064 constitute a BRCT 2 domain; the sequence is DEDRIFYHLA…TLLDEDLYKP (111 aa).

It belongs to the ATP-dependent DNA ligase family. Requires Mg(2+) as cofactor.

It is found in the nucleus. The catalysed reaction is ATP + (deoxyribonucleotide)n-3'-hydroxyl + 5'-phospho-(deoxyribonucleotide)m = (deoxyribonucleotide)n+m + AMP + diphosphate.. Its function is as follows. DNA ligase involved in DNA non-homologous end joining (NHEJ); required for double-strand break (DSB) repair. In Cryptococcus neoformans var. neoformans serotype D (strain B-3501A) (Filobasidiella neoformans), this protein is DNA ligase 4 (LIG4).